Here is a 245-residue protein sequence, read N- to C-terminus: DNA polymerase sliding clamp (245 aa).

Belongs to the PCNA family. As to quaternary structure, homotrimer. The subunits circularize to form a toroid; DNA passes through its center. Replication factor C (RFC) is required to load the toroid on the DNA.

In terms of biological role, sliding clamp subunit that acts as a moving platform for DNA processing. Responsible for tethering the catalytic subunit of DNA polymerase and other proteins to DNA during high-speed replication. This Archaeoglobus fulgidus (strain ATCC 49558 / DSM 4304 / JCM 9628 / NBRC 100126 / VC-16) protein is DNA polymerase sliding clamp.